Reading from the N-terminus, the 287-residue chain is 4-hydroxybenzoate octaprenyltransferase (287 aa).

7 consecutive transmembrane segments (helical) span residues 23–40 (IGSLLLLWPTLWALWLAG), 99–119 (LFVVLVLLAFGLVLTLNTMTI), 141–161 (LPQFVLGAAFGWSIPMAYAAV), 163–183 (ESLPATCWMMFLAYICWTVAY), 213–233 (LIIGLLQFSMLALLLILGTMT), 235–255 (LGMPYYISLLVAGGMFIYQQI), and 266–286 (FKAFHNNKYAGMAIFIGVLFG).

It belongs to the UbiA prenyltransferase family. Mg(2+) serves as cofactor.

It is found in the cell inner membrane. The enzyme catalyses all-trans-octaprenyl diphosphate + 4-hydroxybenzoate = 4-hydroxy-3-(all-trans-octaprenyl)benzoate + diphosphate. It functions in the pathway cofactor biosynthesis; ubiquinone biosynthesis. Functionally, catalyzes the prenylation of para-hydroxybenzoate (PHB) with an all-trans polyprenyl group. Mediates the second step in the final reaction sequence of ubiquinone-8 (UQ-8) biosynthesis, which is the condensation of the polyisoprenoid side chain with PHB, generating the first membrane-bound Q intermediate 3-octaprenyl-4-hydroxybenzoate. The protein is 4-hydroxybenzoate octaprenyltransferase of Pectobacterium carotovorum subsp. carotovorum (strain PC1).